The chain runs to 158 residues: MGVEGILERGYVTTSADKLINWARTGSLWPMTFGLACCAVEMMHTAAGRYDMDRNGLIFRPSPRQSDVMIVAGTLCNKMAPALRKVYDQMPEPKWVISMGSCANGGGYYHYSYSVTRGCDRIVPVDIYVPGCPPTAEALYYGILQLQNKIRRTNTIAR.

4 residues coordinate [4Fe-4S] cluster: Cys-37, Cys-38, Cys-102, and Cys-132.

It belongs to the complex I 20 kDa subunit family. NDH-1 is composed of 14 different subunits. Subunits NuoB, C, D, E, F, and G constitute the peripheral sector of the complex. It depends on [4Fe-4S] cluster as a cofactor.

It is found in the cell inner membrane. The enzyme catalyses a quinone + NADH + 5 H(+)(in) = a quinol + NAD(+) + 4 H(+)(out). Functionally, NDH-1 shuttles electrons from NADH, via FMN and iron-sulfur (Fe-S) centers, to quinones in the respiratory chain. The immediate electron acceptor for the enzyme in this species is believed to be ubiquinone. Couples the redox reaction to proton translocation (for every two electrons transferred, four hydrogen ions are translocated across the cytoplasmic membrane), and thus conserves the redox energy in a proton gradient. The polypeptide is NADH-quinone oxidoreductase subunit B (Halorhodospira halophila (strain DSM 244 / SL1) (Ectothiorhodospira halophila (strain DSM 244 / SL1))).